A 319-amino-acid chain; its full sequence is Acetyl-coenzyme A carboxylase carboxyl transferase subunit alpha (319 aa).

The region spanning 35 to 296 (NIDEEVHRLR…KAQLLADLAD (262 aa)) is the CoA carboxyltransferase C-terminal domain.

Belongs to the AccA family. In terms of assembly, acetyl-CoA carboxylase is a heterohexamer composed of biotin carboxyl carrier protein (AccB), biotin carboxylase (AccC) and two subunits each of ACCase subunit alpha (AccA) and ACCase subunit beta (AccD).

The protein localises to the cytoplasm. The enzyme catalyses N(6)-carboxybiotinyl-L-lysyl-[protein] + acetyl-CoA = N(6)-biotinyl-L-lysyl-[protein] + malonyl-CoA. It participates in lipid metabolism; malonyl-CoA biosynthesis; malonyl-CoA from acetyl-CoA: step 1/1. In terms of biological role, component of the acetyl coenzyme A carboxylase (ACC) complex. First, biotin carboxylase catalyzes the carboxylation of biotin on its carrier protein (BCCP) and then the CO(2) group is transferred by the carboxyltransferase to acetyl-CoA to form malonyl-CoA. The polypeptide is Acetyl-coenzyme A carboxylase carboxyl transferase subunit alpha (Escherichia coli O139:H28 (strain E24377A / ETEC)).